We begin with the raw amino-acid sequence, 86 residues long: UPF0213 protein OB0043 (86 aa).

Residues 3 to 80 (EQHYVYILRC…LPRFEKLKLI (78 aa)) form the GIY-YIG domain.

The protein belongs to the UPF0213 family.

The polypeptide is UPF0213 protein OB0043 (Oceanobacillus iheyensis (strain DSM 14371 / CIP 107618 / JCM 11309 / KCTC 3954 / HTE831)).